A 184-amino-acid polypeptide reads, in one-letter code: ATP synthase subunit b (184 aa).

A helical membrane pass occupies residues 24 to 44 (ILVVVVGFALLMFIVIKFIVP).

Belongs to the ATPase B chain family. As to quaternary structure, F-type ATPases have 2 components, F(1) - the catalytic core - and F(0) - the membrane proton channel. F(1) has five subunits: alpha(3), beta(3), gamma(1), delta(1), epsilon(1). F(0) has three main subunits: a(1), b(2) and c(10-14). The alpha and beta chains form an alternating ring which encloses part of the gamma chain. F(1) is attached to F(0) by a central stalk formed by the gamma and epsilon chains, while a peripheral stalk is formed by the delta and b chains.

The protein localises to the cell membrane. In terms of biological role, f(1)F(0) ATP synthase produces ATP from ADP in the presence of a proton or sodium gradient. F-type ATPases consist of two structural domains, F(1) containing the extramembraneous catalytic core and F(0) containing the membrane proton channel, linked together by a central stalk and a peripheral stalk. During catalysis, ATP synthesis in the catalytic domain of F(1) is coupled via a rotary mechanism of the central stalk subunits to proton translocation. Component of the F(0) channel, it forms part of the peripheral stalk, linking F(1) to F(0). This chain is ATP synthase subunit b (atpF), found in Micrococcus luteus (strain ATCC 4698 / DSM 20030 / JCM 1464 / CCM 169 / CCUG 5858 / IAM 1056 / NBRC 3333 / NCIMB 9278 / NCTC 2665 / VKM Ac-2230) (Micrococcus lysodeikticus).